Here is a 606-residue protein sequence, read N- to C-terminus: NADH-ubiquinone oxidoreductase chain 5 (606 aa).

Transmembrane regions (helical) follow at residues 1 to 21, 43 to 63, 87 to 107, 112 to 132, 137 to 157, 171 to 191, 213 to 233, 241 to 261, 273 to 293, 301 to 321, 324 to 344, 366 to 386, 407 to 429, 457 to 477, 482 to 502, and 582 to 602; these read MNPFASLTLTTLIILTIPIMM, AFTLSLVPLLMFMHTGQEMII, VMFIPVALFVTWSIMEFSMWY, PFINRFFKYLVLFLITMMILV, LFQLFIGWEGVGIMSFLLIGW, AILYNRIGDIGFVLSMAWFLT, LIGLLLAAAGKSAQFGLHPWL, TPVSALLHSSTMVVAGVFLLI, VQTMTLCLGAITTLFTALCAI, IVAFSTSSQLGLMMVTIGINQ, LAFLHICMHAFFKAMLFMCSG, MPFTTTALIIGSLALTGMPYL, WALLMTLIATSLTAAYSTRIIFF, LLIGSIFAGFIISNNIPPMTV, MPLYMKMTALIVTIMGFMLAL, and GLIKLYFLSFLITIMISMTLF.

The protein belongs to the complex I subunit 5 family. Core subunit of respiratory chain NADH dehydrogenase (Complex I) which is composed of 45 different subunits.

Its subcellular location is the mitochondrion inner membrane. The catalysed reaction is a ubiquinone + NADH + 5 H(+)(in) = a ubiquinol + NAD(+) + 4 H(+)(out). Functionally, core subunit of the mitochondrial membrane respiratory chain NADH dehydrogenase (Complex I) which catalyzes electron transfer from NADH through the respiratory chain, using ubiquinone as an electron acceptor. Essential for the catalytic activity and assembly of complex I. This is NADH-ubiquinone oxidoreductase chain 5 (MT-ND5) from Sus scrofa (Pig).